A 191-amino-acid chain; its full sequence is Protein Ves (191 aa).

It belongs to the Ves family.

The polypeptide is Protein Ves (Escherichia coli (strain UTI89 / UPEC)).